The following is a 503-amino-acid chain: Guanosine-5'-triphosphate,3'-diphosphate pyrophosphatase (503 aa).

Belongs to the GppA/Ppx family. GppA subfamily.

It carries out the reaction guanosine 3'-diphosphate 5'-triphosphate + H2O = guanosine 3',5'-bis(diphosphate) + phosphate + H(+). Its pathway is purine metabolism; ppGpp biosynthesis; ppGpp from GTP: step 2/2. Its function is as follows. Catalyzes the conversion of pppGpp to ppGpp. Guanosine pentaphosphate (pppGpp) is a cytoplasmic signaling molecule which together with ppGpp controls the 'stringent response', an adaptive process that allows bacteria to respond to amino acid starvation, resulting in the coordinated regulation of numerous cellular activities. The sequence is that of Guanosine-5'-triphosphate,3'-diphosphate pyrophosphatase from Pseudoalteromonas atlantica (strain T6c / ATCC BAA-1087).